The sequence spans 336 residues: Adenosine deaminase (336 aa).

Positions 15 and 17 each coordinate Zn(2+). Substrate-binding residues include H17, D19, and G172. H199 provides a ligand contact to Zn(2+). Catalysis depends on E202, which acts as the Proton donor. D279 is a binding site for Zn(2+).

It belongs to the metallo-dependent hydrolases superfamily. Adenosine and AMP deaminases family. Adenosine deaminase subfamily. Zn(2+) is required as a cofactor.

It carries out the reaction adenosine + H2O + H(+) = inosine + NH4(+). The enzyme catalyses 2'-deoxyadenosine + H2O + H(+) = 2'-deoxyinosine + NH4(+). Functionally, catalyzes the hydrolytic deamination of adenosine and 2-deoxyadenosine. This Streptococcus thermophilus (strain ATCC BAA-250 / LMG 18311) protein is Adenosine deaminase.